A 452-amino-acid polypeptide reads, in one-letter code: MASVPRGENWTDGTVEVGTHTGNLSSALGVTEWLALQAGNFSSALGLPATTQAPSQVRANLTNQFVQPSWRIALWSLAYGLVVAVAVFGNLIVIWIILAHKRMRTVTNYFLVNLAFSDASVAAFNTLINFIYGLHSEWYFGANYCRFQNFFPITAVFASIYSMTAIAVDRYMAIIDPLKPRLSATATKIVIGSIWILAFLLAFPQCLYSKIKVMPGRTLCYVQWPEGPKQHFTYHIIVIILVYCFPLLIMGVTYTIVGITLWGGEIPGDTCDKYHEQLKAKRKVVKMMIIVVVTFAICWLPYHVYFILTAIYQQLNRWKYIQQVYLASFWLAMSSTMYNPIIYCCLNKRFRAGFKRAFRWCPFIQVSSYDELELKTTRFHPTRQSSLYTVSRMESVTVLFDPNDGDPTKSSRKKRAVPRDPSANGCSHRGSKSASTTSSFISSPYTSVDEYS.

The Extracellular segment spans residues 1–71 (MASVPRGENW…TNQFVQPSWR (71 aa)). 4 N-linked (GlcNAc...) asparagine glycosylation sites follow: Asn-9, Asn-23, Asn-40, and Asn-60. A helical transmembrane segment spans residues 72 to 94 (IALWSLAYGLVVAVAVFGNLIVI). Topologically, residues 95–104 (WIILAHKRMR) are cytoplasmic. The chain crosses the membrane as a helical span at residues 105–126 (TVTNYFLVNLAFSDASVAAFNT). At 127–146 (LINFIYGLHSEWYFGANYCR) the chain is on the extracellular side. The cysteines at positions 145 and 220 are disulfide-linked. The chain crosses the membrane as a helical span at residues 147-168 (FQNFFPITAVFASIYSMTAIAV). The Cytoplasmic segment spans residues 169–188 (DRYMAIIDPLKPRLSATATK). Residues 189–209 (IVIGSIWILAFLLAFPQCLYS) form a helical membrane-spanning segment. Residues 210 to 232 (KIKVMPGRTLCYVQWPEGPKQHF) are Extracellular-facing. Residues 233–257 (TYHIIVIILVYCFPLLIMGVTYTIV) traverse the membrane as a helical segment. Over 258 to 286 (GITLWGGEIPGDTCDKYHEQLKAKRKVVK) the chain is Cytoplasmic. The chain crosses the membrane as a helical span at residues 287–308 (MMIIVVVTFAICWLPYHVYFIL). Residues 309 to 321 (TAIYQQLNRWKYI) lie on the Extracellular side of the membrane. The helical transmembrane segment at 322–346 (QQVYLASFWLAMSSTMYNPIIYCCL) threads the bilayer. The Cytoplasmic portion of the chain corresponds to 347-452 (NKRFRAGFKR…SPYTSVDEYS (106 aa)). A lipid anchor (S-palmitoyl cysteine) is attached at Cys-361. The segment at 400 to 452 (FDPNDGDPTKSSRKKRAVPRDPSANGCSHRGSKSASTTSSFISSPYTSVDEYS) is disordered. Over residues 432–452 (KSASTTSSFISSPYTSVDEYS) the composition is skewed to low complexity.

It belongs to the G-protein coupled receptor 1 family. The anchoring of this receptor to the plasma membrane is probably mediated by the palmitoylation of a cysteine residue.

It is found in the cell membrane. Functionally, this is a receptor for the tachykinin neuropeptide neuromedin-K (neurokinin B). It is associated with G proteins that activate a phosphatidylinositol-calcium second messenger system. The rank order of affinity of this receptor to tachykinins is: neuromedin-K &gt; substance K &gt; substance P. In Rattus norvegicus (Rat), this protein is Neuromedin-K receptor (Tacr3).